A 631-amino-acid chain; its full sequence is Anthrax toxin receptor-like (631 aa).

The signal sequence occupies residues 1–27 (MGSHESLGPYFLVFLLLLLLPPPLFRA). At 28 to 353 (GSLRYHGPDW…TSTTCGIFRN (326 aa)) the chain is on the extracellular side. The VWFA domain occupies 76-246 (DLYFILDKSG…KALRSTIDAL (171 aa)). A divalent metal cation is bound by residues Ser-84, Ser-86, and Thr-150. Residues 354–374 (WLYFVPLLLLVPLLLCCVWRL) form a helical membrane-spanning segment. Residues 375 to 631 (CRKQTVKEPP…LSLPPSEPNF (257 aa)) are Cytoplasmic-facing. The disordered stretch occupies residues 382–413 (EPPPVQKPEKEPEQEKPPSPPPPPPPPPPPLP). Residues 388-397 (KPEKEPEQEK) show a composition bias toward basic and acidic residues. A compositionally biased stretch (pro residues) spans 398–413 (PPSPPPPPPPPPPPLP).

The protein belongs to the ATR family.

Its subcellular location is the membrane. The chain is Anthrax toxin receptor-like (ANTXRL) from Homo sapiens (Human).